The chain runs to 464 residues: Gamma-aminobutyric acid receptor subunit rho-3 (464 aa).

A signal peptide spans 1 to 15; that stretch reads MVLAFWLAFFTYTWI. Residues 16-263 are Extracellular-facing; sequence TLMLDASAVK…LFINFVLRRH (248 aa). Arg108 contacts 4-aminobutanoate. An N-linked (GlcNAc...) asparagine glycan is attached at Asn123. Position 172 (Ser172) interacts with 4-aminobutanoate. Cysteines 181 and 195 form a disulfide. A glycan (N-linked (GlcNAc...) asparagine) is linked at Asn194. Glu200 serves as a coordination point for 4-aminobutanoate. Residues 264–284 form a helical membrane-spanning segment; it reads IFFFVLQTYFPAMLMVMLSWV. Topologically, residues 285–296 are cytoplasmic; that stretch reads SFWIDRRAVPAR. A helical membrane pass occupies residues 297–317; sequence VSLGITTVLTMSTIVTGVSAS. Residues 318–328 are Extracellular-facing; it reads MPQVSYVKAVD. The chain crosses the membrane as a helical span at residues 329–349; it reads VYMWVSSLFVFLSVIEYAAVN. An interaction with SQSTM1 region spans residues 344–445; the sequence is EYAAVNYLTT…NNHVIDTYSR (102 aa). The Cytoplasmic segment spans residues 350–443; it reads YLTTVEEWKQ…LENNHVIDTY (94 aa). Residues 444–464 traverse the membrane as a helical segment; it reads SRIVFPVVYIIFNLFYWGIYV.

It belongs to the ligand-gated ion channel (TC 1.A.9) family. Gamma-aminobutyric acid receptor (TC 1.A.9.5) subfamily. GABRR3 sub-subfamily. Three rho subunits (rho-1/GBRR1, rho-2/GBRR2 and rho-3/GBRR3) coassemble either to form functional homopentamers or heteropentamers. Forms a ternary complex with SQSTM1 and PRKCZ. Expressed in retina.

The protein resides in the postsynaptic cell membrane. It is found in the cell membrane. The catalysed reaction is chloride(in) = chloride(out). With respect to regulation, activated by agonists in the following the potency order: muscimol &gt; TACP &gt; TACA &gt; thiomuscimol &gt; CAMP &gt; CACA, when forming a homopentamer. Inhibited by TPMPA, a rho-specific antagonist, when forming a homopentamer. Inhibited antagonists in the following the potency order: TAMP = TPMPA &gt; P4MPA = THIP &gt; 14AA &gt; 3-APA, when forming a homopentamer. Its function is as follows. Rho subunit of the pentameric ligand-gated chloride channels responsible for mediating the effects of gamma-aminobutyric acid (GABA), the major inhibitory neurotransmitter in the brain. Rho-containing GABA-gated chloride channels are a subclass of GABA(A) receptors (GABAARs) entirely composed of rho subunits, where GABA molecules bind at the rho intersubunit interfaces. When activated by GABA, rho-GABAARs selectively allow the flow of chloride anions across the cell membrane down their electrochemical gradient. The polypeptide is Gamma-aminobutyric acid receptor subunit rho-3 (Rattus norvegicus (Rat)).